The primary structure comprises 301 residues: Acetyl-coenzyme A carboxylase carboxyl transferase subunit beta (301 aa).

The 270-residue stretch at 25–294 (LWIKCPETGE…SAANDMNGGA (270 aa)) folds into the CoA carboxyltransferase N-terminal domain.

The protein belongs to the AccD/PCCB family. As to quaternary structure, acetyl-CoA carboxylase is a heterohexamer composed of biotin carboxyl carrier protein (AccB), biotin carboxylase (AccC) and two subunits each of ACCase subunit alpha (AccA) and ACCase subunit beta (AccD).

It is found in the cytoplasm. The enzyme catalyses N(6)-carboxybiotinyl-L-lysyl-[protein] + acetyl-CoA = N(6)-biotinyl-L-lysyl-[protein] + malonyl-CoA. It functions in the pathway lipid metabolism; malonyl-CoA biosynthesis; malonyl-CoA from acetyl-CoA: step 1/1. Functionally, component of the acetyl coenzyme A carboxylase (ACC) complex. Biotin carboxylase (BC) catalyzes the carboxylation of biotin on its carrier protein (BCCP) and then the CO(2) group is transferred by the transcarboxylase to acetyl-CoA to form malonyl-CoA. The protein is Acetyl-coenzyme A carboxylase carboxyl transferase subunit beta of Rhizobium etli (strain CIAT 652).